The chain runs to 525 residues: Sensory neuron membrane protein 1 (525 aa).

Over 1–11 the chain is Cytoplasmic; it reads MLLPKPLKYAA. A helical transmembrane segment spans residues 12 to 32; the sequence is IGGGVFVFGILIGWVIFPVIL. Residues 33–456 lie on the Extracellular side of the membrane; it reads KSQIKKEMAL…LKHQLFIPKR (424 aa). Residues asparagine 67, asparagine 105, and asparagine 229 are each glycosylated (N-linked (GlcNAc...) asparagine). Disulfide bonds link cysteine 268-cysteine 333, cysteine 297-cysteine 352, and cysteine 335-cysteine 341. N-linked (GlcNAc...) asparagine glycosylation occurs at asparagine 440. The chain crosses the membrane as a helical span at residues 457-477; that stretch reads IVGVIRWWMVSFGLIAVLAGV. Residues 478–525 are Cytoplasmic-facing; that stretch reads MYHFKDNIMGWAAKGESTTAKVNPEDGSNEQRGVSVIGQDREPPKVTM. The tract at residues 496 to 525 is disordered; sequence TAKVNPEDGSNEQRGVSVIGQDREPPKVTM. Basic and acidic residues predominate over residues 516-525; sequence QDREPPKVTM.

Belongs to the CD36 family. As to expression, principal component of the olfactory cilia membrane. Localizes to the somata, dendritic neck and cilia of the olfactory neurons (at protein level). Not detected in the axons of ORNs, the cytoplasm of auxiliary cells or non-sensory structures. Expression is universal among ORNs but differential between neuron and sensillum types.

The protein localises to the cell membrane. In terms of biological role, plays an olfactory role that is not restricted to pheromone sensitivity. May be involved in the odor detection properties of the olfactory receptor neurons (ORNs) rather than their differentiation and growth. This Antheraea polyphemus (Polyphemus moth) protein is Sensory neuron membrane protein 1.